We begin with the raw amino-acid sequence, 204 residues long: Large ribosomal subunit protein eL15 (204 aa).

2 disordered regions span residues 71–91 (RKRP…GVNQ) and 159–182 (REMR…HYSQ). Residues 159-174 (REMRGKTSAGRKHRGL) are compositionally biased toward basic residues.

Belongs to the eukaryotic ribosomal protein eL15 family.

In Faxonius limosus (Spinycheek crayfish), this protein is Large ribosomal subunit protein eL15 (RPL15).